Reading from the N-terminus, the 203-residue chain is Glycerol-3-phosphate acyltransferase (203 aa).

The next 5 helical transmembrane spans lie at 13–33 (TLAC…LILT), 66–86 (TLLL…LWGV), 88–108 (AGMA…WLSF), 118–138 (IGVL…AWLA), and 156–176 (IIPV…FAVM).

The protein belongs to the PlsY family. In terms of assembly, probably interacts with PlsX.

It localises to the cell inner membrane. It catalyses the reaction an acyl phosphate + sn-glycerol 3-phosphate = a 1-acyl-sn-glycero-3-phosphate + phosphate. It functions in the pathway lipid metabolism; phospholipid metabolism. Functionally, catalyzes the transfer of an acyl group from acyl-phosphate (acyl-PO(4)) to glycerol-3-phosphate (G3P) to form lysophosphatidic acid (LPA). This enzyme utilizes acyl-phosphate as fatty acyl donor, but not acyl-CoA or acyl-ACP. This is Glycerol-3-phosphate acyltransferase from Sinorhizobium medicae (strain WSM419) (Ensifer medicae).